A 189-amino-acid chain; its full sequence is Probable nicotinate-nucleotide adenylyltransferase (189 aa).

The protein belongs to the NadD family.

The enzyme catalyses nicotinate beta-D-ribonucleotide + ATP + H(+) = deamido-NAD(+) + diphosphate. It participates in cofactor biosynthesis; NAD(+) biosynthesis; deamido-NAD(+) from nicotinate D-ribonucleotide: step 1/1. Its function is as follows. Catalyzes the reversible adenylation of nicotinate mononucleotide (NaMN) to nicotinic acid adenine dinucleotide (NaAD). The sequence is that of Probable nicotinate-nucleotide adenylyltransferase from Bacillus pumilus (strain SAFR-032).